A 362-amino-acid polypeptide reads, in one-letter code: Histidinol-phosphate aminotransferase 2 (362 aa).

Position 222 is an N6-(pyridoxal phosphate)lysine (K222).

It belongs to the class-II pyridoxal-phosphate-dependent aminotransferase family. Histidinol-phosphate aminotransferase subfamily. As to quaternary structure, homodimer. It depends on pyridoxal 5'-phosphate as a cofactor.

The enzyme catalyses L-histidinol phosphate + 2-oxoglutarate = 3-(imidazol-4-yl)-2-oxopropyl phosphate + L-glutamate. It participates in amino-acid biosynthesis; L-histidine biosynthesis; L-histidine from 5-phospho-alpha-D-ribose 1-diphosphate: step 7/9. This Carboxydothermus hydrogenoformans (strain ATCC BAA-161 / DSM 6008 / Z-2901) protein is Histidinol-phosphate aminotransferase 2.